A 295-amino-acid polypeptide reads, in one-letter code: Small ribosomal subunit protein uS2 (295 aa).

At serine 2 the chain carries N-acetylserine. Residue serine 43 is modified to Phosphoserine. Lysine 52 bears the N6-acetyllysine mark. Positions 54 to 113 are interaction with PPP1R16B; that stretch reads TWEKLLLAARAIVAIENPADVSVISSRNTGQRAVLKFAAATGATPIAGRFTPGTFTNQIQ. Position 89 is an N6-acetyllysine; alternate (lysine 89). Lysine 89 is covalently cross-linked (Glycyl lysine isopeptide (Lys-Gly) (interchain with G-Cter in SUMO2); alternate). Phosphothreonine is present on threonine 97. 2 laminin-binding regions span residues 161-180 and 205-229; these read IPCNNKGAHSVGLMWWMLAR and RDPEEIEKEEQAAAEKAVTKEEFQG. [DE]-W-[ST] repeat units lie at residues 230-232, 247-249, 266-268, 275-277, and 293-295; these read EWT, DWS, and EWS. Positions 242-295 are laminin-binding; it reads QPEVADWSEGVQVPSVPIQQFPTEDWSAQPATEDWSAAPTAQATEWVGTTTEWS. Positions 266 to 295 are disordered; it reads DWSAQPATEDWSAAPTAQATEWVGTTTEWS. The segment covering 280–295 has biased composition (polar residues); sequence PTAQATEWVGTTTEWS.

The protein belongs to the universal ribosomal protein uS2 family. As to quaternary structure, monomer (37LRP) and homodimer (67LR). Component of the small ribosomal subunit. Mature ribosomes consist of a small (40S) and a large (60S) subunit. The 40S subunit contains about 33 different proteins and 1 molecule of RNA (18S). The 60S subunit contains about 49 different proteins and 3 molecules of RNA (28S, 5.8S and 5S). Interacts with RPS21. Interacts with several laminins including at least LAMB1. Interacts with MDK. The mature dimeric form interacts with PPP1R16B (via its fourth ankyrin repeat). Interacts with PPP1CA only in the presence of PPP1R16B. In terms of processing, acylated. Acylation may be a prerequisite for conversion of the monomeric 37 kDa laminin receptor precursor (37LRP) to the mature dimeric 67 kDa laminin receptor (67LR), and may provide a mechanism for membrane association. Post-translationally, cleaved by stromelysin-3 (ST3) at the cell surface. Cleavage by stromelysin-3 may be a mechanism to alter cell-extracellular matrix interactions.

The protein localises to the cell membrane. It localises to the cytoplasm. Its subcellular location is the nucleus. Required for the assembly and/or stability of the 40S ribosomal subunit. Required for the processing of the 20S rRNA-precursor to mature 18S rRNA in a late step of the maturation of 40S ribosomal subunits. Also functions as a cell surface receptor for laminin. Plays a role in cell adhesion to the basement membrane and in the consequent activation of signaling transduction pathways. May play a role in cell fate determination and tissue morphogenesis. Also acts as a receptor for several other ligands, including the pathogenic prion protein, viruses, and bacteria. Acts as a PPP1R16B-dependent substrate of PPP1CA. This chain is Small ribosomal subunit protein uS2, found in Oryctolagus cuniculus (Rabbit).